We begin with the raw amino-acid sequence, 430 residues long: Zinc finger CCCH domain-containing protein 48 (430 aa).

Disordered stretches follow at residues 1–27 (MDLDMNGGNKRVFQRLGGGSNRPTTDS) and 56–90 (GSGPVAASSNKRVADESGFAGPSHRRGPGFSGTAN). The segment at 26-52 (DSNQKVCFHWRAGRCNRYPCPYLHREL) adopts a C3H1-type 1 zinc-finger fold. The C3H1-type 2 zinc finger occupies 102–129 (TKTEKLCKFWVDGNCPYGDKCRYLHCWS). 6 WD repeats span residues 142-183 (GHQK…GVLN), 221-258 (GPVGQVYSLVVGTDLLFAGTQDGSILVWRYNSTTSCFD), 265-304 (GHTLAVVSLYVGANRLYSGAMDNSIKVWSLDNLQCIQTLT), 306-342 (HTSVVMSLICWDQFLLSCSLDNTVKIWAATEGGNLEV), 345-389 (THKE…ERGK), and 391-429 (LAKQEIRSIQIGPGGIFFTGDGSGQVKVWKWSTESTPIL).

In Arabidopsis thaliana (Mouse-ear cress), this protein is Zinc finger CCCH domain-containing protein 48 (ZFWD1).